A 193-amino-acid chain; its full sequence is Putative nucleotidase YqfW (193 aa).

It belongs to the 5'(3')-deoxyribonucleotidase family.

The polypeptide is Putative nucleotidase YqfW (yqfW) (Bacillus subtilis (strain 168)).